The primary structure comprises 150 residues: Myosin, essential light chain (150 aa).

EF-hand domains lie at A3–S38 and E75–Y110. Ca(2+) is bound by residues D16, D18, D20, K22, and D27.

In terms of assembly, myosin is a hexamer of 2 heavy chains and 4 light chains (two regulatory light chains and two essential light chains).

The protein is Myosin, essential light chain (mlcE) of Dictyostelium discoideum (Social amoeba).